Here is an 877-residue protein sequence, read N- to C-terminus: MTKFTTEEVRSKFITYFKANNHTHVPASSLIPDNDPSLMFVNSGMVQFKNVFTGQEKRSYNKAVTSQKSLRAGGKHNDLEHVGYTARHHTFFEMLGNFSFGDYFKEQAIYYTWDLLTKEFELPKDKLYVTIYHTDDPAASYWKKIAGLKDDRIIRIKTNDNFWSMGDTGPCGPCSEIFFDHGEEIYGGLPGTKDENCDRFIEIWNMVFMQYEQINKETRIELPKKSIDTGMGLERMTAVLQHVNNNYDIDLFQEIINFTENIVKIKVDGEAKFSYRVIADHLRASSFLIADGIIPSNEGRGYVLRRIMRRAMRHAHMLGAKEPLMYKLLPKLVDLMGNIYPELKIAESFISSILEQEEIRFKTTLERGLKLLTEETKTLTKGSKLSGEVAFKLYDTYGFPLDLTEDILKNRDITVDHKGFEELMLTQKERARKSWLGSGESKTDQLWFDIKEQYGSTEFLGYTLNEAECKIIALIKNNNLVDNIQEINTQFLLIANQTPFYGESGGQMGDIGMIFSQGSEIEVIDTFKYLRSIIVHKCILKKGKINIGENANLNINIRYRQNLRIHHSATHILHAVLHKILGKQVIQKGSLVTSTYLRFDINHSKAITNQEITLIEDQVNEIIRNNHEVTTTVMFTEDAIKQGAIALFGEKYDSEVRVVKIGETSLELCCGTHVKRTGDIGSFKIISESAIAAGVRRIEAVCGEFVIKLIRERDSLLKSIESSFKTNKNELITKVINILERNKELEKELEKAHLASLDLSIEQIKKQTKEITGIKLLYKEVGNINNKILRQAAENLTKKVENLIVVYIAHGVDKLSITVAVSKAITDKFNAGIIAKELSLFLGGSGGGGQASIAQAGGNDIINLTNINKKLWSLIVT.

Residues H567, H571, C669, and H673 each coordinate Zn(2+).

The protein belongs to the class-II aminoacyl-tRNA synthetase family. Requires Zn(2+) as cofactor.

It is found in the cytoplasm. It catalyses the reaction tRNA(Ala) + L-alanine + ATP = L-alanyl-tRNA(Ala) + AMP + diphosphate. Its function is as follows. Catalyzes the attachment of alanine to tRNA(Ala) in a two-step reaction: alanine is first activated by ATP to form Ala-AMP and then transferred to the acceptor end of tRNA(Ala). Also edits incorrectly charged Ser-tRNA(Ala) and Gly-tRNA(Ala) via its editing domain. This Rickettsia prowazekii (strain Madrid E) protein is Alanine--tRNA ligase.